A 653-amino-acid chain; its full sequence is Acetyl-coenzyme A synthetase 1 (653 aa).

CoA-binding positions include 191–194, Thr311, and Asn335; that span reads RGGR. ATP contacts are provided by residues 387–389, 411–416, Asp500, and Arg515; these read GEP and DTWWQT. Ser523 contributes to the CoA binding site. An ATP-binding site is contributed by Arg526. Residues Val537, His539, and Val542 each coordinate Mg(2+). Position 584 (Arg584) interacts with CoA. Position 609 is an N6-acetyllysine (Lys609).

Belongs to the ATP-dependent AMP-binding enzyme family. Mg(2+) is required as a cofactor. Acetylated. Deacetylation by the SIR2-homolog deacetylase activates the enzyme.

The enzyme catalyses acetate + ATP + CoA = acetyl-CoA + AMP + diphosphate. Functionally, catalyzes the conversion of acetate into acetyl-CoA (AcCoA), an essential intermediate at the junction of anabolic and catabolic pathways. AcsA undergoes a two-step reaction. In the first half reaction, AcsA combines acetate with ATP to form acetyl-adenylate (AcAMP) intermediate. In the second half reaction, it can then transfer the acetyl group from AcAMP to the sulfhydryl group of CoA, forming the product AcCoA. The polypeptide is Acetyl-coenzyme A synthetase 1 (Pseudomonas putida (strain ATCC 47054 / DSM 6125 / CFBP 8728 / NCIMB 11950 / KT2440)).